Here is a 281-residue protein sequence, read N- to C-terminus: Small ribosomal subunit biogenesis GTPase RsgA (281 aa).

One can recognise a CP-type G domain in the interval 59 to 212 (QNEFIRPKVA…LIDTPGFSSL (154 aa)). Residues 108-111 (TKAD) and 155-163 (GQSGVGKTT) each bind GTP. The Zn(2+) site is built by Cys235, Cys240, His242, and Cys250.

It belongs to the TRAFAC class YlqF/YawG GTPase family. RsgA subfamily. Monomer. Associates with 30S ribosomal subunit, binds 16S rRNA. Zn(2+) serves as cofactor.

It is found in the cytoplasm. One of several proteins that assist in the late maturation steps of the functional core of the 30S ribosomal subunit. Helps release RbfA from mature subunits. May play a role in the assembly of ribosomal proteins into the subunit. Circularly permuted GTPase that catalyzes slow GTP hydrolysis, GTPase activity is stimulated by the 30S ribosomal subunit. This chain is Small ribosomal subunit biogenesis GTPase RsgA, found in Mycoplasmopsis agalactiae (strain NCTC 10123 / CIP 59.7 / PG2) (Mycoplasma agalactiae).